A 155-amino-acid chain; its full sequence is Small ribosomal subunit protein uS7cz/uS7cy (155 aa).

The protein belongs to the universal ribosomal protein uS7 family. Part of the 30S ribosomal subunit.

The protein resides in the plastid. It localises to the chloroplast. One of the primary rRNA binding proteins, it binds directly to 16S rRNA where it nucleates assembly of the head domain of the 30S subunit. The protein is Small ribosomal subunit protein uS7cz/uS7cy (rps7-A) of Calycanthus floridus var. glaucus (Eastern sweetshrub).